A 159-amino-acid chain; its full sequence is Ribosomal RNA large subunit methyltransferase H (159 aa).

S-adenosyl-L-methionine-binding residues include leucine 76 and glycine 108.

Belongs to the RNA methyltransferase RlmH family. As to quaternary structure, homodimer.

Its subcellular location is the cytoplasm. The enzyme catalyses pseudouridine(1915) in 23S rRNA + S-adenosyl-L-methionine = N(3)-methylpseudouridine(1915) in 23S rRNA + S-adenosyl-L-homocysteine + H(+). Specifically methylates the pseudouridine at position 1915 (m3Psi1915) in 23S rRNA. This is Ribosomal RNA large subunit methyltransferase H from Ligilactobacillus salivarius (strain UCC118) (Lactobacillus salivarius).